Consider the following 220-residue polypeptide: Ribosomal RNA small subunit methyltransferase G 1 (220 aa).

Residues G79, F84, and R150 each coordinate S-adenosyl-L-methionine.

The protein belongs to the methyltransferase superfamily. RNA methyltransferase RsmG family.

It localises to the cytoplasm. It catalyses the reaction guanosine(527) in 16S rRNA + S-adenosyl-L-methionine = N(7)-methylguanosine(527) in 16S rRNA + S-adenosyl-L-homocysteine. Functionally, specifically methylates the N7 position of guanine in position 527 of 16S rRNA. This Syntrophobacter fumaroxidans (strain DSM 10017 / MPOB) protein is Ribosomal RNA small subunit methyltransferase G 1.